Here is a 502-residue protein sequence, read N- to C-terminus: MAIKAEEISALLRSQIENYESEMSVTDVGTVLQIGDGIALIHGLNDVMAGELVEFHNGVLGLAQNLEESNVGVVILGPYTGITEGDEVKRTGRIMEVPVGEELIGRVVNPLGQPIDGQGPINTTKTRPVEKKATGVMDRKSVDEPLQTGIKAIDALVPIGRGQRELIIGDRQTGKTTIAIDTILNQKDQGTICIYVAIGQKDSTVRANVEKLRQAGALDYTIVVAASASEPSPLLYIAPYSGVTMGEEFMFNGKHVLIVYDDLTKQAAAYRELSLLLRRPPGREAYPGDVFYLHSRLLERAAKLNDDLGGGSITALPIIETQAGDISAYVPTNVISITDGQIFLQSDLFFSGVRPAINAGQSVSRVGGSAQIKAMKKVAGTLRLDLASYRELESFAQFGSDLDEFTASKLERGKRTVEVLKQDQNKPLPVEHQVLIIYALTKGYLDDIPVVDITRFEDELNHWAESNATELLNEIRETGGLPDAEKFDTAINEFKKSFSKSE.

ATP is bound at residue 169-176; the sequence is GDRQTGKT.

The protein belongs to the ATPase alpha/beta chains family. As to quaternary structure, F-type ATPases have 2 components, CF(1) - the catalytic core - and CF(0) - the membrane proton channel. CF(1) has five subunits: alpha(3), beta(3), gamma(1), delta(1), epsilon(1). CF(0) has three main subunits: a(1), b(2) and c(9-12). The alpha and beta chains form an alternating ring which encloses part of the gamma chain. CF(1) is attached to CF(0) by a central stalk formed by the gamma and epsilon chains, while a peripheral stalk is formed by the delta and b chains.

The protein resides in the cell membrane. It catalyses the reaction ATP + H2O + 4 H(+)(in) = ADP + phosphate + 5 H(+)(out). Its function is as follows. Produces ATP from ADP in the presence of a proton gradient across the membrane. The alpha chain is a regulatory subunit. This Staphylococcus aureus (strain Mu3 / ATCC 700698) protein is ATP synthase subunit alpha.